The chain runs to 775 residues: GRIP and coiled-coil domain-containing protein 1 (775 aa).

Residues 13–61 are a coiled coil; sequence SKKDLLETIETQKKQLLQYQARLKDVVRAYKSLLKEKEALEASIKVLSV. Residues 84–93 are compositionally biased toward basic and acidic residues; the sequence is DDRCSTHSED. Disordered stretches follow at residues 84–153 and 614–639; these read DDRC…AGGE and GLPG…SDSL. 3 stretches are compositionally biased toward low complexity: residues 94–110, 133–147, and 629–638; these read STGT…LTST, ASWS…SGDG, and DPADTSSSDS. Residues 153–763 adopt a coiled-coil conformation; sequence EVDKRLHQLK…PEEKQVIMRL (611 aa). Residues 713 to 763 enclose the GRIP domain; the sequence is QSREGANLEYLKNIIYRFLTLPDSLGRQQTLTAILTILHFSPEEKQVIMRL.

The protein resides in the cytoplasm. It is found in the golgi apparatus membrane. Its function is as follows. Probably involved in maintaining Golgi structure. This Homo sapiens (Human) protein is GRIP and coiled-coil domain-containing protein 1 (GCC1).